A 258-amino-acid polypeptide reads, in one-letter code: Glutamate racemase (258 aa).

Residues 11–12 and 43–44 each bind substrate; these read DS and YG. Cys74 functions as the Proton donor/acceptor in the catalytic mechanism. Residue 75 to 76 coordinates substrate; the sequence is NT. Cys182 (proton donor/acceptor) is an active-site residue. Residue 183 to 184 coordinates substrate; the sequence is TH.

It belongs to the aspartate/glutamate racemases family.

It carries out the reaction L-glutamate = D-glutamate. It functions in the pathway cell wall biogenesis; peptidoglycan biosynthesis. Functionally, provides the (R)-glutamate required for cell wall biosynthesis. In Leptospira borgpetersenii serovar Hardjo-bovis (strain JB197), this protein is Glutamate racemase.